The primary structure comprises 999 residues: MEPRAAAAGEPEPPAASSSFQARLWKNLQLGVGRSKGGGGGRAGGPERRTADTPSPSPPPPVGTGNAPARGSGAGSRWSGFKKRKQVLDRVFSSSQPNLCCSSPEPLEPGGAGRAEQGSTLRRRIREHLLPAVKGPAAASGAAGGTPPGGRSPDSAPSSSSASSSLSSSPQPPPRGDRARDEGARRQGPGAHLCHQKSSSLPGTACLEQLLEPPPPPAEPARSPAESRAPETGEEHGSSQKIINTAGTSNAEVPLADPGMYQLDITLRRGQSLAARDRGGTSDPYVKFKIGGKEVFRSKIIHKNLNPVWEEKACILVDHLREPLYIKVFDYDFGLQDDFMGSAFLDLTQLELNRPTDVTLTLKDPHYPDHDLGIILLSVILTPKEGESRDVTMLMRKSWKRSSKELSENEVVGSYFSVKSLFWRTCGRPALPVLGFCRAELQNPYCKNVQFQTQSLRLSDLHRKSHLWRGIVSITLIEGRDLKAMDSNGLSDPYVKFRLGHQKYKSKIMPKTLNPQWREQFDFHLYEERGGVIDITAWDKDAGKRDDFIGRCQVDLSALSREQTHKLELQLEEGEGHLVLLVTLTASATVSISDLSVNSLEDQKEREEILKRYSPLRIFHNLKDVGFLQVKVIRAEGLMAADVTGKSDPFCVVELNNDRLLTHTVYKNLNPEWNKVFTFNIKDIHSVLEVTVYDEDRDRSADFLGKVAIPLLSIQNGEQKAYVLKNKQLTGPTKGVIYLEIDVIFNAVKASLRTLIPKEQKYIEEENRLSKQLLLRNFIRMKRCVMVLVNAAYYVNSCFDWDSPPRSLAAFVLFLFVVWNFELYMIPLVLLLLLTWNYFLIISGKDNRQRDTVVEDMLEDEEEEDDKDDKDSEKKGFINKIYAIQEVCVSVQNILDEVASFGERIKNTFNWTVPFLSWLAIVALCVFTAILYCIPLRYIVLVWGINKFTKKLRSPYAIDNNELLDFLSRVPSDVQVVQYQELKPDPSHSPYKRKKNNLG.

The span at 1–19 shows a compositional bias: low complexity; it reads MEPRAAAAGEPEPPAASSS. A disordered region spans residues 1 to 241; that stretch reads MEPRAAAAGE…TGEEHGSSQK (241 aa). Gly residues predominate over residues 34–44; the sequence is RSKGGGGGRAG. Over residues 65–79 the composition is skewed to low complexity; that stretch reads GNAPARGSGAGSRWS. Residues 92 to 101 show a composition bias toward polar residues; it reads FSSSQPNLCC. Composition is skewed to low complexity over residues 131-141 and 149-169; these read PAVKGPAAASG and GGRS…LSSS. Composition is skewed to basic and acidic residues over residues 175-185 and 228-238; these read RGDRARDEGAR and RAPETGEEHGS. 3 consecutive C2 domains span residues 242-360, 452-569, and 603-724; these read IINT…DVTL, QTQS…KLEL, and QKER…AYVL. Ca(2+)-binding residues include aspartate 277, aspartate 283, aspartate 330, aspartate 332, aspartate 338, aspartate 486, aspartate 492, aspartate 539, aspartate 541, aspartate 547, aspartate 642, aspartate 648, aspartate 694, aspartate 696, and aspartate 702. A run of 2 helical transmembrane segments spans residues 811-831 and 914-934; these read FVLF…LVLL and PFLS…LYCI.

It belongs to the MCTP family. Ca(2+) is required as a cofactor.

It is found in the cytoplasmic vesicle. Its subcellular location is the secretory vesicle. The protein resides in the synaptic vesicle membrane. The protein localises to the recycling endosome. It localises to the endoplasmic reticulum membrane. In terms of biological role, calcium sensor which is essential for the stabilization of normal baseline neurotransmitter release and for the induction and long-term maintenance of presynaptic homeostatic plasticity. The chain is Multiple C2 and transmembrane domain-containing protein 1 (MCTP1) from Homo sapiens (Human).